The following is a 501-amino-acid chain: 25-hydroxyvitamin D-1 alpha hydroxylase, mitochondrial (501 aa).

Heme is bound at residue Cys448.

This sequence belongs to the cytochrome P450 family. Heme is required as a cofactor. Kidney.

It is found in the mitochondrion membrane. It carries out the reaction calcidiol + 2 reduced [adrenodoxin] + O2 + 2 H(+) = calcitriol + 2 oxidized [adrenodoxin] + H2O. The catalysed reaction is secalciferol + 2 reduced [adrenodoxin] + O2 + 2 H(+) = calcitetrol + 2 oxidized [adrenodoxin] + H2O. It functions in the pathway hormone biosynthesis; cholecalciferol biosynthesis. In terms of biological role, catalyzes the conversion of 25-hydroxyvitamin D3 (25(OH)D3) to 1-alpha,25-dihydroxyvitamin D3 (1alpha,25(OH)(2)D3), and of 24,25-dihydroxyvitamin D3 (24,25(OH)(2)D3) to 1-alpha,24,25-trihydroxyvitamin D3 (1alpha,24,25(OH)(3)D3). Is also active with 25-hydroxy-24-oxo-vitamin D3. Plays an important role in normal bone growth, calcium metabolism, and tissue differentiation. This chain is 25-hydroxyvitamin D-1 alpha hydroxylase, mitochondrial (Cyp27b1), found in Rattus norvegicus (Rat).